We begin with the raw amino-acid sequence, 108 residues long: uncharacterized protein (108 aa).

A compositionally biased stretch (polar residues) spans 1–14; sequence MSDSNSRLVYSTET. Residues 1 to 31 are disordered; it reads MSDSNSRLVYSTETGRIDEPKAAPVRPKGDG. The segment covering 15–31 has biased composition (basic and acidic residues); that stretch reads GRIDEPKAAPVRPKGDG.

Belongs to the SUI1 family.

This is an uncharacterized protein from Escherichia coli (strain K12).